Reading from the N-terminus, the 441-residue chain is MQQAAAPKISFVSLGCPKALVDSERIITRLRAEGYELARQHDGADLVIVNTCGFLDSAKQESLAAIGEAMAANGKVIVTGCMGAEPEQIEAAYPGVLSITGPQQYESVLDAVHRAKPALHNPHLDLVPEQGIRLTPRHYAYLKISEGCNNRCSFCIIPKLRGDLASRSAADVLREAEKLVAAGVKELLVISQDTSAYGVDLKYAESPWKDRSVRAKFIDLARELGELGAWVRLHYVYPYPHVDEVIGLMTEGKVLPYLDIPFQHASPDVLKLMKRPAAQDKTLERIKRWRAQCPDLALRSTFIVGFPGETERDFEFLLDWLDEAEIDRLGAFKYEPVAGAPSNALEGQVPDEVKQERWNRLMARQQAISARRLKRKVGTRQQIIIDEIGPTVAKGRSKADAPEIDGSVYLTSRRPLRVGEIVTAKIDRADAYDLHGTVAGF.

The 111-residue stretch at 7 to 117 (PKISFVSLGC…VLDAVHRAKP (111 aa)) folds into the MTTase N-terminal domain. [4Fe-4S] cluster is bound by residues Cys-16, Cys-52, Cys-81, Cys-148, Cys-152, and Cys-155. Positions 134 to 371 (LTPRHYAYLK…MARQQAISAR (238 aa)) constitute a Radical SAM core domain. The TRAM domain maps to 374–440 (KRKVGTRQQI…AYDLHGTVAG (67 aa)).

Belongs to the methylthiotransferase family. RimO subfamily. The cofactor is [4Fe-4S] cluster.

It is found in the cytoplasm. The catalysed reaction is L-aspartate(89)-[ribosomal protein uS12]-hydrogen + (sulfur carrier)-SH + AH2 + 2 S-adenosyl-L-methionine = 3-methylsulfanyl-L-aspartate(89)-[ribosomal protein uS12]-hydrogen + (sulfur carrier)-H + 5'-deoxyadenosine + L-methionine + A + S-adenosyl-L-homocysteine + 2 H(+). In terms of biological role, catalyzes the methylthiolation of an aspartic acid residue of ribosomal protein uS12. The polypeptide is Ribosomal protein uS12 methylthiotransferase RimO (Rhodopseudomonas palustris (strain HaA2)).